The primary structure comprises 145 residues: Putative pre-16S rRNA nuclease (145 aa).

This sequence belongs to the YqgF nuclease family.

Its subcellular location is the cytoplasm. Its function is as follows. Could be a nuclease involved in processing of the 5'-end of pre-16S rRNA. The protein is Putative pre-16S rRNA nuclease of Pseudomonas fluorescens (strain SBW25).